The primary structure comprises 435 residues: Trigger factor (435 aa).

The PPIase FKBP-type domain occupies 163–248 (GDYVTFDFKG…IKEIKVKELP (86 aa)).

It belongs to the FKBP-type PPIase family. Tig subfamily.

The protein resides in the cytoplasm. The catalysed reaction is [protein]-peptidylproline (omega=180) = [protein]-peptidylproline (omega=0). Involved in protein export. Acts as a chaperone by maintaining the newly synthesized protein in an open conformation. Functions as a peptidyl-prolyl cis-trans isomerase. This is Trigger factor from Geotalea daltonii (strain DSM 22248 / JCM 15807 / FRC-32) (Geobacter daltonii).